We begin with the raw amino-acid sequence, 311 residues long: Solute carrier family 25 member 48 (311 aa).

Solcar repeat units follow at residues 3–86 (SFQL…TQRF), 101–205 (RTLS…LSEW), and 214–301 (PSPC…SLQA). 6 consecutive transmembrane segments (helical) span residues 9-29 (FAAGWIGGAASVIVGHPLDTV), 61-81 (GMSFPLASIAVYNSVVFGVFS), 107-127 (LLASMVAGVVSVGLGGPVDLI), 189-209 (VPGYCLYFIPYVFLSEWITPE), 217-237 (CAVWLAGGMAGAISWGTATPM), and 277-295 (ITVNAVRGFPMSAAMFLGY).

It belongs to the mitochondrial carrier (TC 2.A.29) family.

The protein localises to the mitochondrion inner membrane. The protein is Solute carrier family 25 member 48 (SLC25A48) of Homo sapiens (Human).